Here is a 520-residue protein sequence, read N- to C-terminus: Beta-glucosidase 45 (520 aa).

Residues 1–22 form the signal peptide; that stretch reads MKNLTSFVIVILLQSLLFHVYG. The N-linked (GlcNAc...) asparagine glycan is linked to asparagine 3. Residues glutamine 52, histidine 155, and 200–201 each bind a beta-D-glucoside; that span reads NE. The active-site Proton donor is glutamate 201. An intrachain disulfide couples cysteine 220 to cysteine 227. Residue asparagine 226 is glycosylated (N-linked (GlcNAc...) asparagine). A beta-D-glucoside is bound at residue tyrosine 344. Cysteine 352 and cysteine 357 are disulfide-bonded. Asparagine 378 carries an N-linked (GlcNAc...) asparagine glycan. A beta-D-glucoside is bound at residue glutamate 417. The active-site Nucleophile is the glutamate 417. A glycan (N-linked (GlcNAc...) asparagine) is linked at asparagine 435. A beta-D-glucoside is bound by residues tryptophan 466, 473 to 474, and phenylalanine 482; that span reads EW.

The protein belongs to the glycosyl hydrolase 1 family. As to expression, expressed in stems and siliques.

It carries out the reaction Hydrolysis of terminal, non-reducing beta-D-glucosyl residues with release of beta-D-glucose.. Its function is as follows. Hydrolyzes p-nitrophenyl beta-D-glucoside and natural glucosides such as syringin, coniferin and p-coumaryl alcohol glucoside. May be involved in lignification by hydrolyzing monolignol glucosides. In Arabidopsis thaliana (Mouse-ear cress), this protein is Beta-glucosidase 45.